The chain runs to 29 residues: Cyclotide cter-K (29 aa).

Residues 1 to 29 (HEPCGESCVFIPCITTVVGCSCKNKVCYN) constitute a cross-link (cyclopeptide (His-Asn)). 3 cysteine pairs are disulfide-bonded: C4/C20, C8/C22, and C13/C27.

Contains 3 disulfide bonds. Post-translationally, this is a cyclic peptide.

In terms of biological role, probably participates in a plant defense mechanism. The sequence is that of Cyclotide cter-K from Clitoria ternatea (Butterfly pea).